Consider the following 145-residue polypeptide: Alpha-amylase/trypsin inhibitor CM2 (145 aa).

Positions 1–25 (MASKSSITHLLLAAVLVSVFAAAAA) are cleaved as a signal peptide.

Belongs to the protease inhibitor I6 (cereal trypsin/alpha-amylase inhibitor) family. In terms of tissue distribution, developing endosperm.

It localises to the secreted. In terms of biological role, alpha-amylase/trypsin inhibitor. It could be involved in insect defense mechanisms. This chain is Alpha-amylase/trypsin inhibitor CM2, found in Triticum aestivum (Wheat).